Reading from the N-terminus, the 308-residue chain is 26S proteasome regulatory subunit rpn11 (308 aa).

An MPN domain is found at 30–165 (VYISSLALLK…IDAFRLINPS (136 aa)). Residues H112, H114, and D125 each contribute to the Zn(2+) site. Residues 112 to 125 (HSHPGFGCWLSSVD) carry the JAMM motif motif.

It belongs to the peptidase M67A family. In terms of assembly, the 26S proteasome is composed of a core protease, known as the 20S proteasome, capped at one or both ends by the 19S regulatory complex (RC). The RC is composed of at least 18 different subunits in two subcomplexes, the base and the lid, which form the portions proximal and distal to the 20S proteolytic core, respectively.

In terms of biological role, acts as a regulatory subunit of the 26 proteasome which is involved in the ATP-dependent degradation of ubiquitinated proteins. Functionally, transcription factor pap1 is controlled by the functional interaction between the positive regulator pad1 and negative regulator crm1. Both these proteins are also essential for cell viability and for the maintenance of chromosome structure. Pad1 is also responsible for resistance to staurosporine, and other drugs such as cycloheximide and caffeine. This is 26S proteasome regulatory subunit rpn11 (rpn11) from Schizosaccharomyces pombe (strain 972 / ATCC 24843) (Fission yeast).